Reading from the N-terminus, the 428-residue chain is Patatin-like protein 3 (428 aa).

The PNPLA domain occupies 38–252 (LSIDGGGIRG…AANNPTLCAI (215 aa)). Residues 42 to 47 (GGGIRG) carry the GXGXXG motif. Residues 80–84 (GTSTG) carry the GXSXG motif. Ser82 serves as the catalytic Nucleophile. Asp239 acts as the Proton acceptor in catalysis. The DGA/G signature appears at 239 to 241 (DGG). Ser423 is modified (phosphoserine).

It belongs to the patatin family. As to expression, expressed specifically in the stigma, ovary and funiculus of the ovary.

The protein resides in the cytoplasm. Its function is as follows. Possesses non-specific lipolytic acyl hydrolase (LAH) activity. Catalyzes the hydrolysis of the neutral lipids monogalactosyldiacylglycerol (MGDG), digalactosyldiacylglycerol (DGDG) and phosphatidylglycerol (PG), and less efficiently the polar lipids phosphatidylcholine (PC) and phosphatidylinositol (PI), but not the storage lipid triacylglycerol (TAG). May play a role in root development. This is Patatin-like protein 3 (PLP3) from Arabidopsis thaliana (Mouse-ear cress).